A 370-amino-acid chain; its full sequence is Chorismate synthase (370 aa).

An NADP(+)-binding site is contributed by arginine 48. Residues 125–127 (RSS), 241–242 (NA), glycine 286, 301–305 (KPTSS), and arginine 327 each bind FMN.

The protein belongs to the chorismate synthase family. As to quaternary structure, homotetramer. Requires FMNH2 as cofactor.

It carries out the reaction 5-O-(1-carboxyvinyl)-3-phosphoshikimate = chorismate + phosphate. It participates in metabolic intermediate biosynthesis; chorismate biosynthesis; chorismate from D-erythrose 4-phosphate and phosphoenolpyruvate: step 7/7. Functionally, catalyzes the anti-1,4-elimination of the C-3 phosphate and the C-6 proR hydrogen from 5-enolpyruvylshikimate-3-phosphate (EPSP) to yield chorismate, which is the branch point compound that serves as the starting substrate for the three terminal pathways of aromatic amino acid biosynthesis. This reaction introduces a second double bond into the aromatic ring system. The sequence is that of Chorismate synthase from Ruegeria sp. (strain TM1040) (Silicibacter sp.).